Here is a 228-residue protein sequence, read N- to C-terminus: PKHD-type hydroxylase Vapar_1809 (228 aa).

The Fe2OG dioxygenase domain occupies Gln78–Ser179. Residues His97, Asp99, and His160 each coordinate Fe cation. Position 170 (Arg170) interacts with 2-oxoglutarate.

Requires Fe(2+) as cofactor. L-ascorbate serves as cofactor.

This is PKHD-type hydroxylase Vapar_1809 from Variovorax paradoxus (strain S110).